We begin with the raw amino-acid sequence, 378 residues long: TelA-like protein SAS1347 (378 aa).

This sequence belongs to the TelA family.

This is TelA-like protein SAS1347 from Staphylococcus aureus (strain MSSA476).